Consider the following 72-residue polypeptide: Translation initiation factor IF-1 (72 aa).

One can recognise an S1-like domain in the interval 1 to 72 (MAKEEQIELE…TKGRITFRMK (72 aa)).

It belongs to the IF-1 family. As to quaternary structure, component of the 30S ribosomal translation pre-initiation complex which assembles on the 30S ribosome in the order IF-2 and IF-3, IF-1 and N-formylmethionyl-tRNA(fMet); mRNA recruitment can occur at any time during PIC assembly.

Its subcellular location is the cytoplasm. Its function is as follows. One of the essential components for the initiation of protein synthesis. Stabilizes the binding of IF-2 and IF-3 on the 30S subunit to which N-formylmethionyl-tRNA(fMet) subsequently binds. Helps modulate mRNA selection, yielding the 30S pre-initiation complex (PIC). Upon addition of the 50S ribosomal subunit IF-1, IF-2 and IF-3 are released leaving the mature 70S translation initiation complex. This Alcanivorax borkumensis (strain ATCC 700651 / DSM 11573 / NCIMB 13689 / SK2) protein is Translation initiation factor IF-1.